Here is a 362-residue protein sequence, read N- to C-terminus: Serine/threonine-protein phosphatase 2A activator 1 (362 aa).

A compositionally biased stretch (pro residues) spans 1 to 10 (MQPHTQPPQP). Disordered stretches follow at residues 1 to 28 (MQPH…APPR) and 339 to 362 (NVEE…PWAR). A compositionally biased stretch (basic and acidic residues) spans 340 to 351 (VEERGDKNEGKG).

It belongs to the PTPA-type PPIase family.

The protein resides in the cytoplasm. It localises to the nucleus. It carries out the reaction [protein]-peptidylproline (omega=180) = [protein]-peptidylproline (omega=0). PPIases accelerate the folding of proteins. It catalyzes the cis-trans isomerization of proline imidic peptide bonds in oligopeptides. Acts as a regulatory subunit for PP2A-like phosphatases modulating their activity or substrate specificity, probably by inducing a conformational change in the catalytic subunit, a direct target of the PPIase. Can reactivate inactive phosphatase PP2A-phosphatase methylesterase complexes (PP2Ai) in presence of ATP and Mg(2+) by dissociating the inactive form from the complex. The polypeptide is Serine/threonine-protein phosphatase 2A activator 1 (RRD1) (Cryptococcus neoformans var. neoformans serotype D (strain B-3501A) (Filobasidiella neoformans)).